The following is a 277-amino-acid chain: Ethanolamine ammonia-lyase small subunit (277 aa).

Residues Val164, Glu185, and Cys214 each contribute to the adenosylcob(III)alamin site.

This sequence belongs to the EutC family. In terms of assembly, the basic unit is a heterodimer which dimerizes to form tetramers. The heterotetramers trimerize; 6 large subunits form a core ring with 6 small subunits projecting outwards. Requires adenosylcob(III)alamin as cofactor.

The protein localises to the bacterial microcompartment. The enzyme catalyses ethanolamine = acetaldehyde + NH4(+). The protein operates within amine and polyamine degradation; ethanolamine degradation. Catalyzes the deamination of various vicinal amino-alcohols to oxo compounds. Allows this organism to utilize ethanolamine as the sole source of nitrogen and carbon in the presence of external vitamin B12. This chain is Ethanolamine ammonia-lyase small subunit, found in Pseudomonas fluorescens (strain SBW25).